The following is a 30-amino-acid chain: Cyclotide cter-G (30 aa).

A cross-link (cyclopeptide (Gly-Asn)) is located at residues 1–30; that stretch reads GLPCGESCVFIPCITTVVGCSCKNKVCYNN. 3 disulfides stabilise this stretch: C4-C20, C8-C22, and C13-C27.

Contains 3 disulfide bonds. In terms of processing, this is a cyclic peptide.

Functionally, probably participates in a plant defense mechanism. This chain is Cyclotide cter-G, found in Clitoria ternatea (Butterfly pea).